A 362-amino-acid chain; its full sequence is Phosphoserine aminotransferase (362 aa).

Residue arginine 42 participates in L-glutamate binding. Residues 76-77 (AR), tryptophan 102, threonine 153, aspartate 174, and glutamine 197 contribute to the pyridoxal 5'-phosphate site. The residue at position 198 (lysine 198) is an N6-(pyridoxal phosphate)lysine. 239–240 (NT) provides a ligand contact to pyridoxal 5'-phosphate.

This sequence belongs to the class-V pyridoxal-phosphate-dependent aminotransferase family. SerC subfamily. As to quaternary structure, homodimer. Pyridoxal 5'-phosphate is required as a cofactor.

The protein resides in the cytoplasm. The catalysed reaction is O-phospho-L-serine + 2-oxoglutarate = 3-phosphooxypyruvate + L-glutamate. The enzyme catalyses 4-(phosphooxy)-L-threonine + 2-oxoglutarate = (R)-3-hydroxy-2-oxo-4-phosphooxybutanoate + L-glutamate. Its pathway is amino-acid biosynthesis; L-serine biosynthesis; L-serine from 3-phospho-D-glycerate: step 2/3. It participates in cofactor biosynthesis; pyridoxine 5'-phosphate biosynthesis; pyridoxine 5'-phosphate from D-erythrose 4-phosphate: step 3/5. Functionally, catalyzes the reversible conversion of 3-phosphohydroxypyruvate to phosphoserine and of 3-hydroxy-2-oxo-4-phosphonooxybutanoate to phosphohydroxythreonine. This chain is Phosphoserine aminotransferase, found in Proteus mirabilis (strain HI4320).